A 165-amino-acid polypeptide reads, in one-letter code: Ribosome maturation factor RimM (165 aa).

Positions 94–165 (EDEFYIADLT…YVILNYQREA (72 aa)) constitute a PRC barrel domain.

It belongs to the RimM family. Binds ribosomal protein uS19.

The protein resides in the cytoplasm. In terms of biological role, an accessory protein needed during the final step in the assembly of 30S ribosomal subunit, possibly for assembly of the head region. Essential for efficient processing of 16S rRNA. May be needed both before and after RbfA during the maturation of 16S rRNA. It has affinity for free ribosomal 30S subunits but not for 70S ribosomes. The protein is Ribosome maturation factor RimM of Rickettsia conorii (strain ATCC VR-613 / Malish 7).